Here is a 523-residue protein sequence, read N- to C-terminus: UDP-glucuronosyltransferase 3A2 (523 aa).

The N-terminal stretch at 1-22 (MAGQRVLLLVGFLLPGVLLSEA) is a signal peptide. Residues 23–483 (AKILTISTVG…YVFQQPWHEQ (461 aa)) are Extracellular-facing. Asn52 carries N-linked (GlcNAc...) asparagine glycosylation. A helical membrane pass occupies residues 484–504 (YLLDVFVFLLGLTLGTLWLCG). The Cytoplasmic segment spans residues 505-523 (KLLGMAVWWLRGARKVKET).

The protein belongs to the UDP-glycosyltransferase family.

The protein localises to the membrane. The enzyme catalyses glucuronate acceptor + UDP-alpha-D-glucuronate = acceptor beta-D-glucuronoside + UDP + H(+). Its function is as follows. UDP-glucuronosyltransferases catalyze phase II biotransformation reactions in which lipophilic substrates are conjugated with glucuronic acid to increase water solubility and enhance excretion. They are of major importance in the conjugation and subsequent elimination of potentially toxic xenobiotics and endogenous compounds. In Homo sapiens (Human), this protein is UDP-glucuronosyltransferase 3A2 (UGT3A2).